We begin with the raw amino-acid sequence, 218 residues long: Molybdenum cofactor guanylyltransferase (218 aa).

GTP-binding positions include 16–18, Lys-28, Asn-56, Asp-74, and Asp-109; that span reads LAG. Residue Asp-109 participates in Mg(2+) binding.

The protein belongs to the MobA family. Monomer. Requires Mg(2+) as cofactor.

The protein localises to the cytoplasm. The catalysed reaction is Mo-molybdopterin + GTP + H(+) = Mo-molybdopterin guanine dinucleotide + diphosphate. Functionally, transfers a GMP moiety from GTP to Mo-molybdopterin (Mo-MPT) cofactor (Moco or molybdenum cofactor) to form Mo-molybdopterin guanine dinucleotide (Mo-MGD) cofactor. The protein is Molybdenum cofactor guanylyltransferase of Sinorhizobium fredii (strain NBRC 101917 / NGR234).